A 419-amino-acid polypeptide reads, in one-letter code: UDP-N-acetylglucosamine 1-carboxyvinyltransferase 2 (419 aa).

Residue 22 to 23 (KN) participates in phosphoenolpyruvate binding. Arginine 92 contributes to the UDP-N-acetyl-alpha-D-glucosamine binding site. The active-site Proton donor is the cysteine 116. The residue at position 116 (cysteine 116) is a 2-(S-cysteinyl)pyruvic acid O-phosphothioketal. Residues 121–125 (RPIDL), aspartate 306, and isoleucine 328 contribute to the UDP-N-acetyl-alpha-D-glucosamine site.

The protein belongs to the EPSP synthase family. MurA subfamily.

It is found in the cytoplasm. It catalyses the reaction phosphoenolpyruvate + UDP-N-acetyl-alpha-D-glucosamine = UDP-N-acetyl-3-O-(1-carboxyvinyl)-alpha-D-glucosamine + phosphate. It participates in cell wall biogenesis; peptidoglycan biosynthesis. Its function is as follows. Cell wall formation. Adds enolpyruvyl to UDP-N-acetylglucosamine. The sequence is that of UDP-N-acetylglucosamine 1-carboxyvinyltransferase 2 from Streptococcus pyogenes serotype M3 (strain ATCC BAA-595 / MGAS315).